We begin with the raw amino-acid sequence, 641 residues long: Chaperone protein HtpG (641 aa).

The tract at residues 1–351 (MTQSVHAETH…SNDLPLNVSR (351 aa)) is a; substrate-binding. The segment at 352 to 568 (EILQDNKVTV…AHGMSTQMIK (217 aa)) is b. The segment at 569–641 (LMRAAGQPVP…SRINRLLLQA (73 aa)) is c.

This sequence belongs to the heat shock protein 90 family. As to quaternary structure, homodimer.

The protein resides in the cytoplasm. Functionally, molecular chaperone. Has ATPase activity. This Aeromonas hydrophila subsp. hydrophila (strain ATCC 7966 / DSM 30187 / BCRC 13018 / CCUG 14551 / JCM 1027 / KCTC 2358 / NCIMB 9240 / NCTC 8049) protein is Chaperone protein HtpG.